Reading from the N-terminus, the 389-residue chain is 2-aminoethylphosphonate--pyruvate transaminase 1 (389 aa).

N6-(pyridoxal phosphate)lysine is present on K196.

Belongs to the class-V pyridoxal-phosphate-dependent aminotransferase family. PhnW subfamily. In terms of assembly, homodimer. Pyridoxal 5'-phosphate serves as cofactor.

It catalyses the reaction (2-aminoethyl)phosphonate + pyruvate = phosphonoacetaldehyde + L-alanine. Involved in phosphonate degradation. The polypeptide is 2-aminoethylphosphonate--pyruvate transaminase 1 (Paraburkholderia xenovorans (strain LB400)).